Consider the following 312-residue polypeptide: Ribosomal protein L11 methyltransferase (312 aa).

S-adenosyl-L-methionine contacts are provided by threonine 160, glycine 181, aspartate 203, and asparagine 246.

This sequence belongs to the methyltransferase superfamily. PrmA family.

It is found in the cytoplasm. It catalyses the reaction L-lysyl-[protein] + 3 S-adenosyl-L-methionine = N(6),N(6),N(6)-trimethyl-L-lysyl-[protein] + 3 S-adenosyl-L-homocysteine + 3 H(+). Functionally, methylates ribosomal protein L11. This is Ribosomal protein L11 methyltransferase from Staphylococcus aureus (strain MRSA252).